A 370-amino-acid polypeptide reads, in one-letter code: Trans-enoyl reductase xenG (370 aa).

The disordered stretch occupies residues 1–32 (MASTGLPQLPPSQKAVIQSEKTPGAFEVSENR). NADP(+) contacts are provided by residues 54–57 (CDWK), 177–180 (STAS), 200–203 (SPKN), Tyr218, 265–266 (FE), and 356–357 (VS).

This sequence belongs to the zinc-containing alcohol dehydrogenase family. In terms of assembly, monomer.

The protein operates within mycotoxin biosynthesis. Trans-enoyl reductase; part of the gene cluster that mediates the biosynthesis of xenoacremones such as xenoacremone A, a compound that shows inhibitory activity toward the PI3K/AKT signaling pathway and which has the ability to induce apoptosis of A549 lung cancer cells. Within the pathway, cooperation of the hybrid PKS-NRPS xenE and the trans-acting enoyl reductase xenG is responsible for the formation of the reduced tyrosine-nonaketide derivative. The alpha/beta hydrolase xenA then accelerates intramolecular nucleophilic attack to give a pyrrolidone derivative. Subsequently, three enzymes, xenF, xenD, and xenC, coordinately participate in the conversion to xenoacremone B. XenF catalyzes sigmatropic rearrangement to form an A-ring, which leads to an unusual intermediate with a hexane ring, which is required for the formation of the tricarbocyclic product. Epoxidation catalyzed by xenD and the formation of the paracyclophane ether catalyzed by xenC initiate a spontaneous intramolecular Diels-Alder (IMDA) reaction to yield xenoacremone B. Spontaneous hydration of xenoacremone B leads to the formation of xenoacremone A, which undergoes subsequent methylation to afford xenoacremone C. This is Trans-enoyl reductase xenG from Xenoacremonium sinensis (Endophyte fungus).